The chain runs to 896 residues: Bifunctional glutamine synthetase adenylyltransferase/adenylyl-removing enzyme (896 aa).

The interval 1 to 411 is adenylyl removase; the sequence is MSDNRLDTAR…LFNEILSEPE (411 aa). The interval 417 to 896 is adenylyl transferase; sequence NSEWQWAWQE…EVFGEEAATA (480 aa).

It belongs to the GlnE family. Mg(2+) is required as a cofactor.

The catalysed reaction is [glutamine synthetase]-O(4)-(5'-adenylyl)-L-tyrosine + phosphate = [glutamine synthetase]-L-tyrosine + ADP. It catalyses the reaction [glutamine synthetase]-L-tyrosine + ATP = [glutamine synthetase]-O(4)-(5'-adenylyl)-L-tyrosine + diphosphate. Involved in the regulation of glutamine synthetase GlnA, a key enzyme in the process to assimilate ammonia. When cellular nitrogen levels are high, the C-terminal adenylyl transferase (AT) inactivates GlnA by covalent transfer of an adenylyl group from ATP to specific tyrosine residue of GlnA, thus reducing its activity. Conversely, when nitrogen levels are low, the N-terminal adenylyl removase (AR) activates GlnA by removing the adenylyl group by phosphorolysis, increasing its activity. The regulatory region of GlnE binds the signal transduction protein PII (GlnB) which indicates the nitrogen status of the cell. This Neisseria meningitidis serogroup A / serotype 4A (strain DSM 15465 / Z2491) protein is Bifunctional glutamine synthetase adenylyltransferase/adenylyl-removing enzyme.